Here is a 176-residue protein sequence, read N- to C-terminus: Protein MAL2 (176 aa).

Residues 1 to 34 are Cytoplasmic-facing; that stretch reads MSAGGASVPPPPNPAVSFPVPRVTLPAGPDILRT. Residues 31–175 enclose the MARVEL domain; sequence ILRTYSGAFV…SLGLALRRWR (145 aa). Residues 35–55 form a helical membrane-spanning segment; it reads YSGAFVCLEILFGGLVWILVA. Over 56 to 66 the chain is Lumenal; that stretch reads SSNVPLPLLQG. A helical membrane pass occupies residues 67–87; sequence WVMFVSVTAFFFSLLFLGLFL. At 88–102 the chain is on the cytoplasmic side; sequence SGMVTQIDANWNFLD. Residues 103 to 123 traverse the membrane as a helical segment; that stretch reads FAYHFTVFVFYFGAFLLEAAA. Over 124-149 the chain is Lumenal; that stretch reads TSLHDLHYNITMTGQPLLNDNQYNIN. Residue asparagine 132 is glycosylated (N-linked (GlcNAc...) asparagine). Residues 150 to 170 form a helical membrane-spanning segment; it reads VAASIFAFMTTACYGCSLGLA. Residues 171–176 lie on the Cytoplasmic side of the membrane; it reads LRRWRP.

This sequence belongs to the MAL family. As to quaternary structure, interacts with TPD52L2.

The protein resides in the cell membrane. It is found in the apical cell membrane. Member of the machinery of polarized transport. Required for the indirect transcytotic route at the step of the egress of the transcytosing cargo from perinuclear endosomes in order for it to travel to the apical surface via a raft-dependent pathway. The chain is Protein MAL2 (MAL2) from Pongo abelii (Sumatran orangutan).